We begin with the raw amino-acid sequence, 103 residues long: Large ribosomal subunit protein bL21 (103 aa).

Belongs to the bacterial ribosomal protein bL21 family. As to quaternary structure, part of the 50S ribosomal subunit. Contacts protein L20.

In terms of biological role, this protein binds to 23S rRNA in the presence of protein L20. This chain is Large ribosomal subunit protein bL21, found in Azoarcus sp. (strain BH72).